Consider the following 374-residue polypeptide: Spore germination protein GerLB (374 aa).

Helical transmembrane passes span 16–36, 44–64, 86–106, 122–142, 149–169, 192–212, 227–247, 279–301, 313–333, and 341–361; these read IGFAVSSTIIGIGALSMPRDI, DGWIILLLGGLICAVLGWFVT, PVAYTISSILVLTFAALTAYE, TPIQLLSFFFLLVVIYGIAGS, LNVLFLPIVLIAIVLLSLLNI, VKNSIFTFIGFEVALFYAVLL, AVMVNVLSYILIYVTCISVFT, FFTTWIITIYNTTAMYYDVASLL, IFIFISAPIIFMVNMIPSSLN, and YLAWIDMGCVVLAPLLVLIVY.

The protein belongs to the amino acid-polyamine-organocation (APC) superfamily. Spore germination protein (SGP) (TC 2.A.3.9) family.

It is found in the membrane. Functionally, contributes to the L-alanine germination response. In Bacillus cereus, this protein is Spore germination protein GerLB (gerLB).